Consider the following 899-residue polypeptide: Toll-like receptor 4 (899 aa).

The signal sequence occupies residues 1–46 (MCPLQIHVLHLIQGNQKNRKGKYVNMTRQLWYILPLLFLLCHCVTS). Residues N25, N75, N83, and N93 are each glycosylated (N-linked (GlcNAc...) asparagine). Topologically, residues 47 to 702 (ERRCYFSKIS…LERNCRSYTA (656 aa)) are extracellular. LRR repeat units lie at residues 83–103 (NESV…PDLP), 104–126 (RSLL…AFAR), 128–150 (QNLT…LTAG), 155–179 (LTRL…VLSD), 181–202 (VSLN…MRKI), 203–229 (HALK…YFQN), and 230–253 (VHGI…TFSY). Residues N129, N137, N146, and N168 are each glycosylated (N-linked (GlcNAc...) asparagine). N237, N256, N275, and N313 each carry an N-linked (GlcNAc...) asparagine glycan. LRR repeat units lie at residues 257 to 282 (LTHL…DLKN), 313 to 336 (NTSL…VLMY), 338 to 360 (PKTL…ALET), and 363 to 386 (LVNL…IFSN). N388, N432, and N463 each carry an N-linked (GlcNAc...) asparagine glycan. LRR repeat units follow at residues 468–493 (HYPL…VFYD), 501–524 (LEGL…FFDY), 526–549 (TGLK…EKGE), 554–577 (LLKL…ILRN), 579–601 (ISLE…LKHI), 602–624 (KGLR…VMRE), and 631–654 (SSNL…HFLR). N516 carries an N-linked (GlcNAc...) asparagine glycan. N633, N637, and N668 each carry an N-linked (GlcNAc...) asparagine glycan. Residues 703–723 (VIVLFSCVFVILLTVIVCGVV) traverse the membrane as a helical segment. Over 724–899 (YRYRWKLRYL…WRKLRDPISM (176 aa)) the chain is Cytoplasmic. The TIR domain occupies 756–897 (YEFDAFISYA…IFWRKLRDPI (142 aa)).

This sequence belongs to the Toll-like receptor family. Expressed in all tissues tested. The highest expression is in the hepatopancreas, with moderate expression in the gills, and low expression in the gonads, adductor muscle, hemocytes, and mantle.

It localises to the cell membrane. Functionally, may be involved in the innate immune response. The protein is Toll-like receptor 4 of Pinctada imbricata (Atlantic pearl-oyster).